A 474-amino-acid polypeptide reads, in one-letter code: Pyruvate kinase (474 aa).

Residue Arg32 coordinates substrate. The K(+) site is built by Asn34, Ser36, and Asp66. 34–37 (NFSH) lines the ATP pocket. ATP-binding residues include Arg73 and Lys155. Glu221 lines the Mg(2+) pocket. The substrate site is built by Gly244, Asp245, and Thr277. Asp245 provides a ligand contact to Mg(2+).

It belongs to the pyruvate kinase family. In terms of assembly, homotetramer. Requires Mg(2+) as cofactor. It depends on K(+) as a cofactor.

It catalyses the reaction pyruvate + ATP = phosphoenolpyruvate + ADP + H(+). It functions in the pathway carbohydrate degradation; glycolysis; pyruvate from D-glyceraldehyde 3-phosphate: step 5/5. The sequence is that of Pyruvate kinase (pykF) from Clostridium perfringens (strain 13 / Type A).